A 477-amino-acid polypeptide reads, in one-letter code: Calcium uptake protein 1, mitochondrial (477 aa).

The transit peptide at 1-33 (MFRLNALSALAELAVGSRWYHGTSQPTQTKRRL) directs the protein to the mitochondrion. The disordered stretch occupies residues 55–108 (AHAESPPSVNSKKTDAGDKGKSKDTREVSSHEGSAADTAAEPYPEEKKKKRSGF). Residues 66–84 (KKTDAGDKGKSKDTREVSS) show a composition bias toward basic and acidic residues. The polybasic region stretch occupies residues 101-112 (KKKKRSGFRDRK). Position 124 is a phosphoserine (Ser-124). The tract at residues 128–131 (KIFR) is k/R-ring. Residues 220 to 255 (TPQRNFEIAFKMFDLNGDGEVDMEEFEQVQSIIRSQ) enclose the EF-hand 1 domain. Ca(2+) contacts are provided by Asp-233, Asn-235, Asp-237, Glu-239, and Glu-244. Residues 261-265 (RHRDR) are k/R-ring. The EF-hand 2; degenerate domain occupies 356–376 (KDGKGLTFQEVENFFTFLKNI). An EF-hand 3 domain is found at 410-445 (LSDHVCDVVFALFDCDGNGELSNKEFVSIMKQRLMR). Ca(2+) contacts are provided by Asp-423, Asp-425, Asn-427, Glu-429, and Glu-434. At Arg-457 the chain carries Asymmetric dimethylarginine. The segment at 457–467 (RLMQAMWKCAQ) is C-helix region.

The protein belongs to the MICU1 family. MICU1 subfamily. In terms of assembly, heterodimer; disulfide-linked; heterodimerizes with MICU2 or MICU3. Homodimer; disulfide-linked. Component of the uniplex complex, composed of MCU, EMRE/SMDT1, MICU1 and MICU2 (or MICU3) in a 4:4:1:1 stoichiometry. The composition of calcium sensors within the uniplex complex can differ depending on tissues: a MICU1 homodimer can be present instead of the MICU1-MICU2 heterodimer in skeletal-muscle and kidney. MICU1 is recruited to the uniplex complex by EMRE/SMDT1, and it associates with MCU at low calcium levels, occluding the pore of the MCU channel. Associates with the MICOS complex. Interacts with SLC25A23. Interacts with CHCHD4/MIA40; which introduces the interchain disulfide bond with MICU2. Interacts (when methylated) with UCP2; leading to decrease the calcium sensitivity of MICU1. Phosphorylation at Ser-124 by AKT1 impairs its maturation and stability. Post-translationally, asymmetric dimethylation at Arg-457 by PRMT1 decreases the calcium sensitivity of MICU1 by promoting interaction with UCP2. In terms of processing, degraded by YME1L1 when not complexed as homodimer or heterodimer. Not degraded when complexed as homodimer or heterodimer; the presence of the interchain disulfide bond protecting MICU1 from degradation by YME1L1.

It localises to the mitochondrion intermembrane space. The protein localises to the mitochondrion inner membrane. Its function is as follows. Calcium sensor of the mitochondrial calcium uniporter (MCU) channel, which senses calcium level via its EF-hand domains. MICU1 and MICU2 (or MICU3) form a disulfide-linked heterodimer that stimulates and inhibits MCU activity, depending on the concentration of calcium. At low calcium levels, MICU1 occludes the pore of the MCU channel, preventing mitochondrial calcium uptake. At higher calcium levels, calcium-binding to MICU1 and MICU2 (or MICU3) induces a conformational change that weakens MCU-MICU1 interactions and moves the MICU1-MICU2 heterodimer away from the pore, allowing calcium permeation through the MCU channel. Also required to protect against manganese toxicity by preventing manganese uptake by MCU: mechanistically, manganese-binding to its EF-hand domains does not induce any conformational change, maintaining MCU pore occlusion. Acts as a regulator of mitochondrial cristae structure independently of its ability to regulate the mitochondrial calcium uniporter channel. Regulates glucose-dependent insulin secretion in pancreatic beta-cells by regulating mitochondrial calcium uptake. Induces T-helper 1-mediated autoreactivity, which is accompanied by the release of IFNG. The protein is Calcium uptake protein 1, mitochondrial (Micu1) of Rattus norvegicus (Rat).